The sequence spans 179 residues: Interleukin-10 (179 aa).

An N-terminal signal peptide occupies residues 1–19 (MPSPALLCCCLVLLAGVGA). Cystine bridges form between C31-C127 and C81-C133. An N-linked (GlcNAc...) asparagine glycan is attached at N135.

The protein belongs to the IL-10 family. As to quaternary structure, homodimer. Interacts with IL10RA and IL10RB.

It is found in the secreted. Major immune regulatory cytokine that acts on many cells of the immune system where it has profound anti-inflammatory functions, limiting excessive tissue disruption caused by inflammation. Mechanistically, IL10 binds to its heterotetrameric receptor comprising IL10RA and IL10RB leading to JAK1 and STAT2-mediated phosphorylation of STAT3. In turn, STAT3 translocates to the nucleus where it drives expression of anti-inflammatory mediators. Targets antigen-presenting cells (APCs) such as macrophages and monocytes and inhibits their release of pro-inflammatory cytokines including granulocyte-macrophage colony-stimulating factor /GM-CSF, granulocyte colony-stimulating factor/G-CSF, IL-1 alpha, IL-1 beta, IL-6, IL-8 and TNF-alpha. Also interferes with antigen presentation by reducing the expression of MHC-class II and co-stimulatory molecules, thereby inhibiting their ability to induce T cell activation. In addition, controls the inflammatory response of macrophages by reprogramming essential metabolic pathways including mTOR signaling. The chain is Interleukin-10 (IL10) from Vulpes vulpes (Red fox).